A 447-amino-acid chain; its full sequence is Sporulation protein YpeB (447 aa).

Belongs to the YpeB family.

In terms of biological role, required for spore cortex hydrolysis during germination. Appears to be required for either expression, localization, activation or function of SleB. The sequence is that of Sporulation protein YpeB from Oceanobacillus iheyensis (strain DSM 14371 / CIP 107618 / JCM 11309 / KCTC 3954 / HTE831).